Consider the following 95-residue polypeptide: Citrate lyase acyl carrier protein (95 aa).

Serine 14 bears the O-(phosphoribosyl dephospho-coenzyme A)serine mark.

The protein belongs to the CitD family. In terms of assembly, oligomer with a subunit composition of (alpha,beta,gamma)6.

The protein localises to the cytoplasm. In terms of biological role, covalent carrier of the coenzyme of citrate lyase. The polypeptide is Citrate lyase acyl carrier protein (Haemophilus influenzae (strain PittGG)).